The primary structure comprises 277 residues: uncharacterized protein (277 aa).

5 consecutive transmembrane segments (helical) span residues 46–66 (IAAI…YGGL), 73–93 (LFEG…ILWM), 143–163 (TTVI…VLIL), 174–194 (FFYA…GYGT), and 228–248 (KGLI…MEWV).

This sequence belongs to the oxidase-dependent Fe transporter (OFeT) (TC 9.A.10.1) family.

The protein localises to the cell membrane. This is an uncharacterized protein from Archaeoglobus fulgidus (strain ATCC 49558 / DSM 4304 / JCM 9628 / NBRC 100126 / VC-16).